Here is a 417-residue protein sequence, read N- to C-terminus: Gamma-glutamyl phosphate reductase (417 aa).

The protein belongs to the gamma-glutamyl phosphate reductase family.

It is found in the cytoplasm. The enzyme catalyses L-glutamate 5-semialdehyde + phosphate + NADP(+) = L-glutamyl 5-phosphate + NADPH + H(+). It participates in amino-acid biosynthesis; L-proline biosynthesis; L-glutamate 5-semialdehyde from L-glutamate: step 2/2. In terms of biological role, catalyzes the NADPH-dependent reduction of L-glutamate 5-phosphate into L-glutamate 5-semialdehyde and phosphate. The product spontaneously undergoes cyclization to form 1-pyrroline-5-carboxylate. This Streptococcus agalactiae serotype Ia (strain ATCC 27591 / A909 / CDC SS700) protein is Gamma-glutamyl phosphate reductase.